The sequence spans 478 residues: 3-isopropylmalate dehydratase large subunit (478 aa).

[4Fe-4S] cluster contacts are provided by C347, C407, and C410.

It belongs to the aconitase/IPM isomerase family. LeuC type 1 subfamily. In terms of assembly, heterodimer of LeuC and LeuD. The cofactor is [4Fe-4S] cluster.

The catalysed reaction is (2R,3S)-3-isopropylmalate = (2S)-2-isopropylmalate. Its pathway is amino-acid biosynthesis; L-leucine biosynthesis; L-leucine from 3-methyl-2-oxobutanoate: step 2/4. In terms of biological role, catalyzes the isomerization between 2-isopropylmalate and 3-isopropylmalate, via the formation of 2-isopropylmaleate. The sequence is that of 3-isopropylmalate dehydratase large subunit from Prochlorococcus marinus (strain MIT 9303).